A 654-amino-acid chain; its full sequence is Neuroendocrine convertase 2 (654 aa).

The N-terminal stretch at 1–21 is a signal peptide; it reads MAAATWSWLLAPFLLLHWASA. The propeptide occupies 22 to 121; it reads GAGGGAGGSG…VQQPGFKRVK (100 aa). In terms of domain architecture, Peptidase S8 spans 158–483; it reads QWYLKNTGQN…FGVLDAGAMV (326 aa). A glycan (N-linked (GlcNAc...) asparagine) is linked at Asn-189. Catalysis depends on charge relay system residues Asp-196 and His-237. Disulfide bonds link Cys-254/Cys-404 and Cys-346/Cys-376. The N-linked (GlcNAc...) asparagine glycan is linked to Asn-312. Ser-412 acts as the Charge relay system in catalysis. The 137-residue stretch at 491–627 folds into the P/Homo B domain; it reads SVPPRYHCEA…SLVLHGTKEA (137 aa). The cysteines at positions 498 and 524 are disulfide-linked. Asn-544 is a glycosylation site (N-linked (GlcNAc...) asparagine).

This sequence belongs to the peptidase S8 family. Furin subfamily. In terms of tissue distribution, expressed in the central nervous system (CNS) and midgut endocrine cells of third instar larva (at protein level). In the CNS, expressed in the CA-LP1 and CA-LP2 neurons which innervate the corpus allatum, and in the CC-MS2 neurons which innervate the corpora cardiaca of the ring gland. Also expressed in the CC-MS1, SP3, Tv and Va neurons. Expressed in Akh-producing cells of the corpora cardiaca. In the embryo, restricted to the final stages of embryogenesis where expression is found in anterior sensory structures and in only 168 cells in the brain and ventral nerve cord. After larvae hatch, the sensory structures and most cells in the CNS turn off or substantially reduce expression. In third instar larva, expressed at higher levels in the anterior section than in the posterior section. Little expression is detected in the adult head. In the developing eye, expressed at higher levels in pale-type R7 photoreceptor cells than in yellow-type R7 cells although expression is not seen in all pale-type R7 cells. Also expressed in outer photoreceptor cells.

The protein localises to the secreted. It carries out the reaction Release of protein hormones and neuropeptides from their precursors, generally by hydrolysis of -Lys-Arg-|- bonds.. Its function is as follows. Serine endopeptidase which is involved in the processing of hormone and other protein precursors at sites comprised of pairs of basic amino acid residues. Required during embryonic and larval development, probably by proteolytically processing peptide hormones involved in hatching, larval growth and larval molting. Required for the processing and activation of Akh which maintains normal hemolymph sugar levels. Has been shown in one study to be required for processing of sli into slit N-product and slit C-product in the embryo which is necessary for lateral transverse muscle elongation but has been shown in another study not to be required for sli cleavage. Required for larval hatching. Also required for normal larval wandering behavior which occurs prior to pupariation. Required during pupal development for head eversion, leg and wing disk extension, and abdominal differentiation. Required during eye development for R8 photoreceptor cell specification by regulating processing of ligands required for the BMP and activin signaling pathways. This chain is Neuroendocrine convertase 2, found in Drosophila melanogaster (Fruit fly).